The following is a 769-amino-acid chain: Apoptotic enhancer 1 protein (769 aa).

Disordered regions lie at residues 69 to 88, 265 to 396, and 451 to 518; these read PVRVVAQPPPPHPQALSQQY, SVEP…LDES, and PQLP…RSDD. Residues 275–284 are compositionally biased toward low complexity; that stretch reads QQQQPSPQMM. A compositionally biased stretch (basic and acidic residues) spans 285 to 295; sequence KSEEFSEKRDL. Over residues 339-353 the composition is skewed to low complexity; sequence STDPHSNHSSPSTSS. 3 stretches are compositionally biased toward polar residues: residues 354 to 378, 453 to 467, and 474 to 491; these read QKAPTLITFSPPSFEQKINSSTMTR, LPTSQEEPSAITSET, and NSESKQVATSSDSTNNLE. ANK repeat units follow at residues 585 to 617 and 618 to 652; these read EGITALHNAICAGHYEIVRFLIENDADVNAQDS and DGWTPLHCAASCNNLPMVRQLVEGGGCVLASTLSD. An SH3 domain is found at 684–746; it reads INTGKVYAAY…PRTYLALYPS (63 aa).

This sequence belongs to the iASPP family. In terms of assembly, interacts with cep-1/p53; the interaction inhibits pro-apoptotic activity of cep-1.

Its subcellular location is the nucleus. Functionally, negetively regulates apoptosis via its interaction with cep-1. This is Apoptotic enhancer 1 protein from Caenorhabditis elegans.